A 303-amino-acid polypeptide reads, in one-letter code: MIKQRTLKNVVRATGVGVHTGEKVYLTLRPAPPNTGIIFCRTDLDPVVQIPARVNYIGDTSLSTCLTKGDVRIATVEHLLSALAGVGVDNLYIDLTSPELPIMDGSAGPFVFLIQSAGIEEQNAPKEFIRIKQRVKIEEADKSVMVEPYNGFKISFGIDFDHPLFNEHNQNATLDFSSTSYVKEVSRARTFGFLSDYEFIRKNNLALGASLDNALVLDEYKILNQDGLRYPDEFVKHKILDVIGDLYLLGRSLIGSFSGVKSGHTLNSQLLKKLLATKSAWEIVTFKDPSELPFAYTPVAMTA.

Residues histidine 78, histidine 237, and aspartate 241 each contribute to the Zn(2+) site. The active-site Proton donor is histidine 264.

It belongs to the LpxC family. Zn(2+) serves as cofactor.

The catalysed reaction is a UDP-3-O-[(3R)-3-hydroxyacyl]-N-acetyl-alpha-D-glucosamine + H2O = a UDP-3-O-[(3R)-3-hydroxyacyl]-alpha-D-glucosamine + acetate. The protein operates within glycolipid biosynthesis; lipid IV(A) biosynthesis; lipid IV(A) from (3R)-3-hydroxytetradecanoyl-[acyl-carrier-protein] and UDP-N-acetyl-alpha-D-glucosamine: step 2/6. Functionally, catalyzes the hydrolysis of UDP-3-O-myristoyl-N-acetylglucosamine to form UDP-3-O-myristoylglucosamine and acetate, the committed step in lipid A biosynthesis. This is UDP-3-O-acyl-N-acetylglucosamine deacetylase from Coxiella burnetii (strain CbuK_Q154) (Coxiella burnetii (strain Q154)).